The following is a 212-amino-acid chain: Protein-L-isoaspartate O-methyltransferase (212 aa).

The active site involves S60.

Belongs to the methyltransferase superfamily. L-isoaspartyl/D-aspartyl protein methyltransferase family.

It localises to the cytoplasm. The catalysed reaction is [protein]-L-isoaspartate + S-adenosyl-L-methionine = [protein]-L-isoaspartate alpha-methyl ester + S-adenosyl-L-homocysteine. Its function is as follows. Catalyzes the methyl esterification of L-isoaspartyl residues in peptides and proteins that result from spontaneous decomposition of normal L-aspartyl and L-asparaginyl residues. It plays a role in the repair and/or degradation of damaged proteins. This chain is Protein-L-isoaspartate O-methyltransferase, found in Pseudomonas putida (strain ATCC 700007 / DSM 6899 / JCM 31910 / BCRC 17059 / LMG 24140 / F1).